Consider the following 128-residue polypeptide: MKKMLVEFRDFALKGNVLDLAVAVVIGAAFGKIVSSLVDNIIMPLVGVLLGGLDFTDLSFKVGKSVIQYGAFIQSIVDFVIIAFAIFIFVKVLTSFIKKKEQTVEETPVPPTEEYLKEIRDLLKEQQK.

2 helical membrane-spanning segments follow: residues 11-31 (FALKGNVLDLAVAVVIGAAFG) and 70-90 (GAFIQSIVDFVIIAFAIFIFV).

This sequence belongs to the MscL family. Homopentamer.

The protein resides in the cell membrane. Channel that opens in response to stretch forces in the membrane lipid bilayer. May participate in the regulation of osmotic pressure changes within the cell. The sequence is that of Large-conductance mechanosensitive channel from Listeria monocytogenes serotype 4b (strain CLIP80459).